Here is a 379-residue protein sequence, read N- to C-terminus: Leukocyte elastase inhibitor A (379 aa).

Phosphoserine is present on Ser300. Positions 351–379 are CARD-binding motif (CBM); it reads EFTVDHPFIFFIRHNPTSNVLFLGRVCSP.

The protein belongs to the serpin family. Ov-serpin subfamily. Monomer. Interacts (via C-terminus) with CASP1 and CASP4 (via CARD domain); these interactions regulate the activity of inflammatory caspases. In terms of tissue distribution, ubiquitous with higher expression in pancreas, spleen and bone marrow.

It is found in the secreted. The protein resides in the cytoplasm. Its subcellular location is the cytolytic granule. The protein localises to the early endosome. Functionally, neutrophil serine protease inhibitor that plays an essential role in the regulation of the innate immune response, inflammation and cellular homeostasis. Acts primarily to protect the cell from proteases released in the cytoplasm during stress or infection. These proteases are important in killing microbes but when released from granules, these potent enzymes also destroy host proteins and contribute to mortality. Regulates the activity of the neutrophil proteases elastase, cathepsin G, proteinase-3, chymase, chymotrypsin, and kallikrein-3. Also acts as a potent intracellular inhibitor of granzyme H. During inflammation, limits the activity of inflammatory caspases CASP1 and CASP4 by suppressing their caspase-recruitment domain (CARD) oligomerization and enzymatic activation. In addition, promotes the proliferation of beta-cells when secreted. This chain is Leukocyte elastase inhibitor A (Serpinb1a), found in Mus musculus (Mouse).